The sequence spans 171 residues: Putative charged multivesicular body protein 4B-like protein CHMP4BP1 (171 aa).

Over residues methionine 1–histidine 17 the composition is skewed to basic and acidic residues. 2 disordered regions span residues methionine 1–alanine 24 and glutamate 132–threonine 171.

It belongs to the SNF7 family.

This chain is Putative charged multivesicular body protein 4B-like protein CHMP4BP1 (CHMP4BP1), found in Homo sapiens (Human).